Consider the following 1026-residue polypeptide: Cadherin-like and PC-esterase domain-containing protein 1 (1026 aa).

The N-terminal stretch at M1–T34 is a signal peptide. 6 N-linked (GlcNAc...) asparagine glycosylation sites follow: N251, N404, N413, N737, N791, and N985.

Belongs to the PC-esterase family.

In Homo sapiens (Human), this protein is Cadherin-like and PC-esterase domain-containing protein 1 (CPED1).